The sequence spans 331 residues: Lipoyl synthase (331 aa).

The interval 1 to 33 (MSDALIATSSEAPQSPAEQYDPTRKQKSADKTA) is disordered. Over residues 7-17 (ATSSEAPQSPA) the composition is skewed to polar residues. Residues 21 to 33 (DPTRKQKSADKTA) are compositionally biased toward basic and acidic residues. Residues Cys-78, Cys-83, Cys-89, Cys-104, Cys-108, Cys-111, and Ser-318 each contribute to the [4Fe-4S] cluster site. Residues 89 to 307 (CFGKGTATFM…EEEAYKMGFT (219 aa)) form the Radical SAM core domain.

It belongs to the radical SAM superfamily. Lipoyl synthase family. The cofactor is [4Fe-4S] cluster.

It is found in the cytoplasm. It catalyses the reaction [[Fe-S] cluster scaffold protein carrying a second [4Fe-4S](2+) cluster] + N(6)-octanoyl-L-lysyl-[protein] + 2 oxidized [2Fe-2S]-[ferredoxin] + 2 S-adenosyl-L-methionine + 4 H(+) = [[Fe-S] cluster scaffold protein] + N(6)-[(R)-dihydrolipoyl]-L-lysyl-[protein] + 4 Fe(3+) + 2 hydrogen sulfide + 2 5'-deoxyadenosine + 2 L-methionine + 2 reduced [2Fe-2S]-[ferredoxin]. It participates in protein modification; protein lipoylation via endogenous pathway; protein N(6)-(lipoyl)lysine from octanoyl-[acyl-carrier-protein]: step 2/2. Its function is as follows. Catalyzes the radical-mediated insertion of two sulfur atoms into the C-6 and C-8 positions of the octanoyl moiety bound to the lipoyl domains of lipoate-dependent enzymes, thereby converting the octanoylated domains into lipoylated derivatives. This Cupriavidus necator (strain ATCC 17699 / DSM 428 / KCTC 22496 / NCIMB 10442 / H16 / Stanier 337) (Ralstonia eutropha) protein is Lipoyl synthase.